Here is a 201-residue protein sequence, read N- to C-terminus: FMN-dependent NADH:quinone oxidoreductase (201 aa).

92–95 (MWNL) lines the FMN pocket.

This sequence belongs to the azoreductase type 1 family. As to quaternary structure, homodimer. Requires FMN as cofactor.

It carries out the reaction 2 a quinone + NADH + H(+) = 2 a 1,4-benzosemiquinone + NAD(+). It catalyses the reaction N,N-dimethyl-1,4-phenylenediamine + anthranilate + 2 NAD(+) = 2-(4-dimethylaminophenyl)diazenylbenzoate + 2 NADH + 2 H(+). Functionally, quinone reductase that provides resistance to thiol-specific stress caused by electrophilic quinones. Also exhibits azoreductase activity. Catalyzes the reductive cleavage of the azo bond in aromatic azo compounds to the corresponding amines. The chain is FMN-dependent NADH:quinone oxidoreductase from Caldicellulosiruptor saccharolyticus (strain ATCC 43494 / DSM 8903 / Tp8T 6331).